We begin with the raw amino-acid sequence, 137 residues long: Large ribosomal subunit protein uL16 (137 aa).

The protein belongs to the universal ribosomal protein uL16 family. Part of the 50S ribosomal subunit.

Its function is as follows. Binds 23S rRNA and is also seen to make contacts with the A and possibly P site tRNAs. The polypeptide is Large ribosomal subunit protein uL16 (Cereibacter sphaeroides (strain ATCC 17025 / ATH 2.4.3) (Rhodobacter sphaeroides)).